Here is a 376-residue protein sequence, read N- to C-terminus: Endoplasmic reticulum-Golgi intermediate compartment protein 2 (376 aa).

Residues methionine 1–glycine 33 lie on the Cytoplasmic side of the membrane. Residues glycine 34–valine 54 form a helical membrane-spanning segment. Residues tyrosine 55–cysteine 318 are Lumenal-facing. The chain crosses the membrane as a helical span at residues glycine 319–valine 339. Topologically, residues aspartate 340–glutamine 376 are cytoplasmic.

It belongs to the ERGIC family.

Its subcellular location is the endoplasmic reticulum-Golgi intermediate compartment membrane. The protein localises to the golgi apparatus. The protein resides in the cis-Golgi network membrane. It is found in the endoplasmic reticulum membrane. Functionally, possible role in transport between endoplasmic reticulum and Golgi. The sequence is that of Endoplasmic reticulum-Golgi intermediate compartment protein 2 (ergic2) from Danio rerio (Zebrafish).